The primary structure comprises 318 residues: Dual specificity protein phosphatase 2 (318 aa).

Residues 27–148 (EAERTLLLDC…FQTYCPDLCS (122 aa)) enclose the Rhodanese domain. Residues 176–317 (GPVEILPYLY…LLQLETQVLC (142 aa)) form the Tyrosine-protein phosphatase domain. Cysteine 261 serves as the catalytic Phosphocysteine intermediate.

This sequence belongs to the protein-tyrosine phosphatase family. Non-receptor class dual specificity subfamily. In terms of assembly, interacts with MAPK14; this interaction does not lead to catalytic activation of DUSP2 and dephosphrylation of MAPK14. In hematopoietic tissues such as spleen and thymus.

The protein localises to the nucleus. It carries out the reaction O-phospho-L-tyrosyl-[protein] + H2O = L-tyrosyl-[protein] + phosphate. The catalysed reaction is O-phospho-L-threonyl-[protein] + H2O = L-threonyl-[protein] + phosphate. Dephosphorylates both phosphorylated Thr and Tyr residues in MAPK1, and dephosphorylation of phosphotyrosine is slightly faster than that of phosphothreonine. Can dephosphorylate MAPK1. This Mus musculus (Mouse) protein is Dual specificity protein phosphatase 2.